The chain runs to 1357 residues: DNA-directed RNA polymerase subunit beta (1357 aa).

Belongs to the RNA polymerase beta chain family. In terms of assembly, the RNAP catalytic core consists of 2 alpha, 1 beta, 1 beta' and 1 omega subunit. When a sigma factor is associated with the core the holoenzyme is formed, which can initiate transcription.

It carries out the reaction RNA(n) + a ribonucleoside 5'-triphosphate = RNA(n+1) + diphosphate. Its function is as follows. DNA-dependent RNA polymerase catalyzes the transcription of DNA into RNA using the four ribonucleoside triphosphates as substrates. This Pseudomonas fluorescens (strain SBW25) protein is DNA-directed RNA polymerase subunit beta.